Consider the following 307-residue polypeptide: Voltage-dependent anion channel-forming protein sll1024 (307 aa).

4 helical membrane-spanning segments follow: residues 26–46 (VIPAIASRVLVCMAFSLGVTL), 54–74 (FSIPIQESIVPSIVLGLLLVF), 226–246 (LIFLYCFITPFQIVNTLHWAT), and 247–267 (AFVVGIIAFTVFGIEEIGVEI).

It belongs to the anion channel-forming bestrophin (TC 1.A.46) family.

It localises to the cell membrane. The protein is Voltage-dependent anion channel-forming protein sll1024 of Synechocystis sp. (strain ATCC 27184 / PCC 6803 / Kazusa).